The chain runs to 348 residues: Holliday junction branch migration complex subunit RuvB (348 aa).

Residues 4–184 (ADRLIAASGR…FGIVQRLEFY (181 aa)) form a large ATPase domain (RuvB-L) region. ATP contacts are provided by residues I23, R24, G65, K68, T69, T70, 131-133 (EDF), R174, Y184, and R221. A Mg(2+)-binding site is contributed by T69. The tract at residues 185-255 (NDKDLSTIVS…VADMALNLLD (71 aa)) is small ATPAse domain (RuvB-S). The tract at residues 258–348 (ERGFDHSDRR…GGDFSEPGDE (91 aa)) is head domain (RuvB-H). Positions 294, 313, and 318 each coordinate DNA.

It belongs to the RuvB family. In terms of assembly, homohexamer. Forms an RuvA(8)-RuvB(12)-Holliday junction (HJ) complex. HJ DNA is sandwiched between 2 RuvA tetramers; dsDNA enters through RuvA and exits via RuvB. An RuvB hexamer assembles on each DNA strand where it exits the tetramer. Each RuvB hexamer is contacted by two RuvA subunits (via domain III) on 2 adjacent RuvB subunits; this complex drives branch migration. In the full resolvosome a probable DNA-RuvA(4)-RuvB(12)-RuvC(2) complex forms which resolves the HJ.

The protein resides in the cytoplasm. It catalyses the reaction ATP + H2O = ADP + phosphate + H(+). In terms of biological role, the RuvA-RuvB-RuvC complex processes Holliday junction (HJ) DNA during genetic recombination and DNA repair, while the RuvA-RuvB complex plays an important role in the rescue of blocked DNA replication forks via replication fork reversal (RFR). RuvA specifically binds to HJ cruciform DNA, conferring on it an open structure. The RuvB hexamer acts as an ATP-dependent pump, pulling dsDNA into and through the RuvAB complex. RuvB forms 2 homohexamers on either side of HJ DNA bound by 1 or 2 RuvA tetramers; 4 subunits per hexamer contact DNA at a time. Coordinated motions by a converter formed by DNA-disengaged RuvB subunits stimulates ATP hydrolysis and nucleotide exchange. Immobilization of the converter enables RuvB to convert the ATP-contained energy into a lever motion, pulling 2 nucleotides of DNA out of the RuvA tetramer per ATP hydrolyzed, thus driving DNA branch migration. The RuvB motors rotate together with the DNA substrate, which together with the progressing nucleotide cycle form the mechanistic basis for DNA recombination by continuous HJ branch migration. Branch migration allows RuvC to scan DNA until it finds its consensus sequence, where it cleaves and resolves cruciform DNA. The polypeptide is Holliday junction branch migration complex subunit RuvB (Pseudomonas putida (strain ATCC 47054 / DSM 6125 / CFBP 8728 / NCIMB 11950 / KT2440)).